We begin with the raw amino-acid sequence, 208 residues long: uncharacterized protein (208 aa).

This is an uncharacterized protein from Caenorhabditis elegans.